Here is a 441-residue protein sequence, read N- to C-terminus: Chitinase-like protein Idgf3 (441 aa).

The N-terminal stretch at 1–23 (MSGSLWLSLALSLAVLAQFKVSA) is a signal peptide. The region spanning 25–441 (PNLVCFYDSQ…MLRAIKYRLL (417 aa)) is the GH18 domain. A disulfide bridge links Cys-29 with Cys-56. The N-linked (GlcNAc...) asparagine glycan is linked to Asn-221. Residues 310 to 331 (GDSGMPVVSSTQGPAPAGPQSK) form a disordered region. Cys-342 and Cys-425 are oxidised to a cystine.

This sequence belongs to the glycosyl hydrolase 18 family. IDGF subfamily. Post-translationally, glycosylated.

The protein resides in the secreted. Functionally, cooperates with insulin-like peptides to stimulate the proliferation, polarization and motility of imaginal disk cells. May act by stabilizing the binding of insulin-like peptides to its receptor through a simultaneous interaction with both molecules to form a multiprotein signaling complex. The sequence is that of Chitinase-like protein Idgf3 (Idgf3) from Drosophila simulans (Fruit fly).